Here is a 231-residue protein sequence, read N- to C-terminus: Orotidine 5'-phosphate decarboxylase (231 aa).

Substrate is bound by residues aspartate 9, lysine 34, 62–71 (DLKLHDIPSV), threonine 117, arginine 179, glutamine 188, glycine 208, and arginine 209. Lysine 64 (proton donor) is an active-site residue.

The protein belongs to the OMP decarboxylase family. Type 1 subfamily. In terms of assembly, homodimer.

It carries out the reaction orotidine 5'-phosphate + H(+) = UMP + CO2. The protein operates within pyrimidine metabolism; UMP biosynthesis via de novo pathway; UMP from orotate: step 2/2. Its function is as follows. Catalyzes the decarboxylation of orotidine 5'-monophosphate (OMP) to uridine 5'-monophosphate (UMP). The polypeptide is Orotidine 5'-phosphate decarboxylase (Aquifex aeolicus (strain VF5)).